Reading from the N-terminus, the 361-residue chain is Protein SSUH2 homolog (361 aa).

Its subcellular location is the cytoplasm. It localises to the nucleus. In terms of biological role, plays a role in odontogenesis. The sequence is that of Protein SSUH2 homolog from Danio rerio (Zebrafish).